The chain runs to 602 residues: MMIKRSITTNMKALRLIQPHLLKTGSLRTDLLCTISSFFSSCERDFSSISNGNVCFRERLRSGIVDIKKDDAIALFQEMIRSRPLPSLVDFSRFFSAIARTKQFNLVLDFCKQLELNGIAHNIYTLNIMINCFCRCCKTCFAYSVLGKVMKLGYEPDTTTFNTLIKGLFLEGKVSEAVVLVDRMVENGCQPDVVTYNSIVNGICRSGDTSLALDLLRKMEERNVKADVFTYSTIIDSLCRDGCIDAAISLFKEMETKGIKSSVVTYNSLVRGLCKAGKWNDGALLLKDMVSREIVPNVITFNVLLDVFVKEGKLQEANELYKEMITRGISPNIITYNTLMDGYCMQNRLSEANNMLDLMVRNKCSPDIVTFTSLIKGYCMVKRVDDGMKVFRNISKRGLVANAVTYSILVQGFCQSGKIKLAEELFQEMVSHGVLPDVMTYGILLDGLCDNGKLEKALEIFEDLQKSKMDLGIVMYTTIIEGMCKGGKVEDAWNLFCSLPCKGVKPNVMTYTVMISGLCKKGSLSEANILLRKMEEDGNAPNDCTYNTLIRAHLRDGDLTASAKLIEEMKSCGFSADASSIKMVIDMLLSGELDKSFLDMLS.

A mitochondrion-targeting transit peptide spans 1–95 (MMIKRSITTN…PSLVDFSRFF (95 aa)). PPR repeat units lie at residues 87–121 (SLVD…GIAH), 122–156 (NIYT…GYEP), 157–191 (DTTT…GCQP), 192–226 (DVVT…NVKA), 227–261 (DVFT…GIKS), 262–296 (SVVT…EIVP), 297–331 (NVIT…GISP), 332–366 (NIIT…KCSP), 367–401 (DIVT…GLVA), 402–436 (NAVT…GVLP), 437–471 (DVMT…KMDL), 472–506 (GIVM…GVKP), 507–541 (NVMT…GNAP), and 542–576 (NDCT…GFSA).

The protein belongs to the PPR family. P subfamily.

The protein localises to the mitochondrion. The sequence is that of Putative pentatricopeptide repeat-containing protein At1g12700, mitochondrial from Arabidopsis thaliana (Mouse-ear cress).